Reading from the N-terminus, the 254-residue chain is Emerin (254 aa).

An N-acetylmethionine modification is found at Met1. The 45-residue stretch at Met1–Arg45 folds into the LEM domain. A phosphoserine mark is found at Ser8 and Ser29. Residues Arg46–Gln222 are interaction with F-actin. Residue Ser49 is modified to Phosphoserine; by PKA. Residues Ser54, Ser60, Ser87, Ser98, Ser141, Ser142, and Ser143 each carry the phosphoserine modification. Tyr161 is subject to Phosphotyrosine. Positions Arg168–Ser186 are interaction with CTNNB1. 3 positions are modified to phosphoserine: Ser171, Ser173, and Ser175. A helical membrane pass occupies residues Val223–Tyr243.

As to quaternary structure, interacts with lamins A and C, BANF1, GMCL, BCLAF1 and YTHDC1/YT521. Interacts with TMEM43; the interaction retains emerin in the nuclear inner membrane. Interacts with SUN1 and SUN2. Interacts with ACTB, SPTAN1, F-actin, CTNNB1 and beta-tubulin. Interacts with TMEM201. Interacts with NEMP1. Found in four different phosphorylated forms, three of which appear to be associated with the cell cycle. As to expression, skeletal muscle, heart, colon, testis, ovary and pancreas.

The protein resides in the nucleus inner membrane. The protein localises to the nucleus outer membrane. Functionally, stabilizes and promotes the formation of a nuclear actin cortical network. Stimulates actin polymerization in vitro by binding and stabilizing the pointed end of growing filaments. Inhibits beta-catenin activity by preventing its accumulation in the nucleus. Acts by influencing the nuclear accumulation of beta-catenin through a CRM1-dependent export pathway. Links centrosomes to the nuclear envelope via a microtubule association. Required for proper localization of non-farnesylated prelamin-A/C. Together with NEMP1, contributes to nuclear envelope stiffness in germ cells. EMD and BAF are cooperative cofactors of HIV-1 infection. Association of EMD with the viral DNA requires the presence of BAF and viral integrase. The association of viral DNA with chromatin requires the presence of BAF and EMD. The sequence is that of Emerin (EMD) from Homo sapiens (Human).